The sequence spans 158 residues: Small ribosomal subunit protein uS13 (158 aa).

Belongs to the universal ribosomal protein uS13 family. In terms of assembly, part of the 30S ribosomal subunit. Forms a loose heterodimer with protein S19. Forms two bridges to the 50S subunit in the 70S ribosome.

Its function is as follows. Located at the top of the head of the 30S subunit, it contacts several helices of the 16S rRNA. In the 70S ribosome it contacts the 23S rRNA (bridge B1a) and protein L5 of the 50S subunit (bridge B1b), connecting the 2 subunits; these bridges are implicated in subunit movement. In Picrophilus torridus (strain ATCC 700027 / DSM 9790 / JCM 10055 / NBRC 100828 / KAW 2/3), this protein is Small ribosomal subunit protein uS13.